The chain runs to 286 residues: Probable endonuclease 4 (286 aa).

Positions 72, 112, 147, 181, 184, 215, 228, 230, and 260 each coordinate Zn(2+).

This sequence belongs to the AP endonuclease 2 family. Zn(2+) serves as cofactor.

It carries out the reaction Endonucleolytic cleavage to 5'-phosphooligonucleotide end-products.. Endonuclease IV plays a role in DNA repair. It cleaves phosphodiester bonds at apurinic or apyrimidinic (AP) sites, generating a 3'-hydroxyl group and a 5'-terminal sugar phosphate. This is Probable endonuclease 4 from Mycoplasma pneumoniae (strain ATCC 29342 / M129 / Subtype 1) (Mycoplasmoides pneumoniae).